We begin with the raw amino-acid sequence, 470 residues long: Annexin C1 (470 aa).

The tract at residues 1–143 is disordered; that stretch reads MYGQQNNYGA…QGQSPMMYLG (143 aa). Positions 15–34 are enriched in low complexity; it reads QWGQAPPQGYQPGYQNGPPA. Over residues 82–92 the composition is skewed to pro residues; that stretch reads PQPPFGAPSPA. Low complexity-rich tracts occupy residues 93–110 and 128–138; these read PAGY…YGAP and GYGSQPQGQSP. Annexin repeat units follow at residues 161–232, 233–304, 316–388, and 395–468; these read YDAR…LLSL, GPLG…MALS, QLVQ…FIAR, and DGVV…GIIE.

Belongs to the annexin family.

In terms of biological role, does not appear to play a major role in virulence. May play a role in titan cell formation. This Cryptococcus neoformans var. grubii serotype A (strain H99 / ATCC 208821 / CBS 10515 / FGSC 9487) (Filobasidiella neoformans var. grubii) protein is Annexin C1.